A 298-amino-acid polypeptide reads, in one-letter code: Probable alpha-L-glutamate ligase (298 aa).

The region spanning 104–287 (MQLLSRHGIG…VAGKIIEFLE (184 aa)) is the ATP-grasp domain. ATP is bound by residues lysine 141, 178–179 (EY), aspartate 187, and 211–213 (RSN). 3 residues coordinate Mg(2+): aspartate 248, glutamate 260, and asparagine 262. Mn(2+) is bound by residues aspartate 248, glutamate 260, and asparagine 262.

This sequence belongs to the RimK family. Mg(2+) is required as a cofactor. The cofactor is Mn(2+).

This Aeromonas salmonicida (strain A449) protein is Probable alpha-L-glutamate ligase.